The following is a 564-amino-acid chain: Dihydroxy-acid dehydratase (564 aa).

Cys53 contributes to the [2Fe-2S] cluster binding site. Residue Asp85 coordinates Mg(2+). Cys126 contacts [2Fe-2S] cluster. Residues Asp127 and Lys128 each coordinate Mg(2+). Residue Lys128 is modified to N6-carboxylysine. Cys203 is a binding site for [2Fe-2S] cluster. Mg(2+) is bound at residue Glu454. Ser480 (proton acceptor) is an active-site residue.

Belongs to the IlvD/Edd family. As to quaternary structure, homodimer. [2Fe-2S] cluster is required as a cofactor. Requires Mg(2+) as cofactor.

It catalyses the reaction (2R)-2,3-dihydroxy-3-methylbutanoate = 3-methyl-2-oxobutanoate + H2O. It carries out the reaction (2R,3R)-2,3-dihydroxy-3-methylpentanoate = (S)-3-methyl-2-oxopentanoate + H2O. Its pathway is amino-acid biosynthesis; L-isoleucine biosynthesis; L-isoleucine from 2-oxobutanoate: step 3/4. It functions in the pathway amino-acid biosynthesis; L-valine biosynthesis; L-valine from pyruvate: step 3/4. In terms of biological role, functions in the biosynthesis of branched-chain amino acids. Catalyzes the dehydration of (2R,3R)-2,3-dihydroxy-3-methylpentanoate (2,3-dihydroxy-3-methylvalerate) into 2-oxo-3-methylpentanoate (2-oxo-3-methylvalerate) and of (2R)-2,3-dihydroxy-3-methylbutanoate (2,3-dihydroxyisovalerate) into 2-oxo-3-methylbutanoate (2-oxoisovalerate), the penultimate precursor to L-isoleucine and L-valine, respectively. The polypeptide is Dihydroxy-acid dehydratase (Mycobacterium leprae (strain TN)).